A 389-amino-acid polypeptide reads, in one-letter code: Very-long-chain 3-oxoacyl-CoA reductase (389 aa).

A helical transmembrane segment spans residues 34-54; that stretch reads IAVFLLAIGLFHVALKVVSYV. NADP(+)-binding residues include valine 80, aspartate 134, asparagine 162, tyrosine 239, lysine 243, valine 272, and serine 274. Tyrosine 239 functions as the Proton donor in the catalytic mechanism. Residue lysine 243 is the Lowers pKa of active site Tyr of the active site. Positions 359–389 are disordered; sequence QAAGGVADPKNTTAAREGYATESLKNETLKH.

The protein belongs to the short-chain dehydrogenases/reductases (SDR) family.

The protein resides in the endoplasmic reticulum membrane. The catalysed reaction is a very-long-chain (3R)-3-hydroxyacyl-CoA + NADP(+) = a very-long-chain 3-oxoacyl-CoA + NADPH + H(+). It functions in the pathway lipid metabolism; fatty acid biosynthesis. In terms of biological role, component of the microsomal membrane bound fatty acid elongation system, which produces the 26-carbon very long-chain fatty acids (VLCFA) from palmitate. Catalyzes the reduction of the 3-ketoacyl-CoA intermediate that is formed in each cycle of fatty acid elongation. VLCFAs serve as precursors for ceramide and sphingolipids. This chain is Very-long-chain 3-oxoacyl-CoA reductase, found in Yarrowia lipolytica (strain CLIB 122 / E 150) (Yeast).